Reading from the N-terminus, the 347-residue chain is NADH-ubiquinone oxidoreductase chain 2 (347 aa).

Transmembrane regions (helical) follow at residues 1–21 (MNPFVSVIIYTTIILGTMIVM), 59–79 (YFMTQATASMLLMLAVIINLL), 93–115 (TASMIMTMALAMKLGLSPFHFWV), 149–169 (INPNLILTMSMLSILVGGWGG), 178–198 (IMAYSSIAHMGWMAAILIYNP), 201–221 (TILNLTIYLMTTFTMFTMFAL), 239–259 (IITTLMLTILLSMGGLPPLTG), 274–294 (DSIILPTLMAIMALLNLYFYM), and 325–345 (LLPTMIILSTMLLPLTPMLVV).

This sequence belongs to the complex I subunit 2 family. In terms of assembly, core subunit of respiratory chain NADH dehydrogenase (Complex I) which is composed of 45 different subunits. Interacts with TMEM242.

Its subcellular location is the mitochondrion inner membrane. It carries out the reaction a ubiquinone + NADH + 5 H(+)(in) = a ubiquinol + NAD(+) + 4 H(+)(out). Core subunit of the mitochondrial membrane respiratory chain NADH dehydrogenase (Complex I) which catalyzes electron transfer from NADH through the respiratory chain, using ubiquinone as an electron acceptor. Essential for the catalytic activity and assembly of complex I. The polypeptide is NADH-ubiquinone oxidoreductase chain 2 (Hippopotamus amphibius (Hippopotamus)).